A 139-amino-acid chain; its full sequence is Small ribosomal subunit protein bS6 (139 aa).

A disordered region spans residues 119–139 (LKGASKVETPTGPESTDIQEK). Residues 130-139 (GPESTDIQEK) are compositionally biased toward polar residues.

This sequence belongs to the bacterial ribosomal protein bS6 family.

Binds together with bS18 to 16S ribosomal RNA. The chain is Small ribosomal subunit protein bS6 from Borreliella burgdorferi (strain ZS7) (Borrelia burgdorferi).